The primary structure comprises 223 residues: Twisted gastrulation protein homolog 1 (223 aa).

The signal sequence occupies residues 1 to 25 (MKLHYVAVLTLAILMFLTWLPESLS). N-linked (GlcNAc...) asparagine glycosylation is found at asparagine 52 and asparagine 81.

Belongs to the twisted gastrulation protein family. Interacts with CHRD and BMP4. This interaction enhances CHRD/BMP4 complex formation. Interacts with BMP7.

It localises to the secreted. May be involved in dorsoventral axis formation. Seems to antagonize BMP signaling by forming ternary complexes with CHRD and BMPs, thereby preventing BMPs from binding to their receptors. In addition to the anti-BMP function, also has pro-BMP activity, partly mediated by cleavage and degradation of CHRD, which releases BMPs from ternary complexes. May be an important modulator of BMP-regulated cartilage development and chondrocyte differentiation. May play a role in thymocyte development. The protein is Twisted gastrulation protein homolog 1 (TWSG1) of Homo sapiens (Human).